The following is a 246-amino-acid chain: Uridylate kinase (246 aa).

Residue 13–16 participates in ATP binding; the sequence is KLSG. UMP is bound at residue Gly-54. ATP-binding residues include Gly-55 and Arg-59. UMP is bound by residues Asp-74 and 135 to 142; that span reads AGMPYFST. Positions 163, 169, and 172 each coordinate ATP.

The protein belongs to the UMP kinase family. In terms of assembly, homohexamer.

It is found in the cytoplasm. The enzyme catalyses UMP + ATP = UDP + ADP. It participates in pyrimidine metabolism; CTP biosynthesis via de novo pathway; UDP from UMP (UMPK route): step 1/1. Its activity is regulated as follows. Inhibited by UTP. Its function is as follows. Catalyzes the reversible phosphorylation of UMP to UDP. This chain is Uridylate kinase, found in Bifidobacterium longum (strain NCC 2705).